The primary structure comprises 217 residues: Non-structural protein NS3 (217 aa).

This sequence belongs to the orbivirus NS3 family.

May play a role in the release of virions from infected cells. The chain is Non-structural protein NS3 (Segment-10) from Camelus dromedarius (Dromedary).